A 292-amino-acid chain; its full sequence is ATP synthase gamma chain (292 aa).

It belongs to the ATPase gamma chain family. F-type ATPases have 2 components, CF(1) - the catalytic core - and CF(0) - the membrane proton channel. CF(1) has five subunits: alpha(3), beta(3), gamma(1), delta(1), epsilon(1). CF(0) has three main subunits: a, b and c.

The protein localises to the cell inner membrane. Functionally, produces ATP from ADP in the presence of a proton gradient across the membrane. The gamma chain is believed to be important in regulating ATPase activity and the flow of protons through the CF(0) complex. The chain is ATP synthase gamma chain from Bradyrhizobium sp. (strain ORS 278).